The primary structure comprises 859 residues: Envelope glycoprotein gp160 (859 aa).

An N-terminal signal peptide occupies residues 1–23 (MAYFSSRLPIALLLIGISGFVCK). Residues 24-678 (QYVTVFYGIP…WFDLTSWIKY (655 aa)) are Extracellular-facing. N-linked (GlcNAc...) asparagine; by host glycosylation occurs at N37. C44 and C57 are disulfide-bonded. Residues N70, N112, N122, N142, N150, N165, N191, N206, N238, N241, N248, N272, N278, N289, N300, N310, N343, N367, N400, N410, N413, N450, N464, and N468 are each glycosylated (N-linked (GlcNAc...) asparagine; by host). 5 disulfide bridges follow: C101–C214, C108–C205, C113–C164, C227–C257, and C237–C249. The segment at 113–163 (CSKTETNPGNASSTTTTKPTTTSRGLKTINETDPCIKNDSCTGLGEEEIMQ) is V1. The tract at residues 164-205 (CNFSMTGLRRDELKQYKDTWYSEDLECNNTRKYTSRCYIRTC) is V2. The tract at residues 305–337 (CKRPGNKTVVPIRTVSGLLFHSQPINKRPRQAW) is V3. Cysteines 305 and 338 form a disulfide. Intrachain disulfides connect C392–C449 and C399–C422. The tract at residues 399–422 (CNMTWFLNWVENKTNTTRRNYAPC) is V4. The V5 stretch occupies residues 465–471 (STTNISV). The segment at 514-534 (GVMVLGFLGFLAMAGSAMGAT) is fusion peptide. An immunosuppression region spans residues 577–593 (LQARVTAIEKYLKDQAQ). Residues N613, N622, and N638 are each glycosylated (N-linked (GlcNAc...) asparagine; by host). A coiled-coil region spans residues 626-647 (QQWEKQVHFLDANITALLEEAQ). Residues 659–680 (KINSWDVFGNWFDLTSWIKYIH) are MPER; binding to GalCer. Residues 679-699 (IHLGLYIVAGLVVLRIVVYIV) traverse the membrane as a helical segment. Residues 700–859 (QMLARLRKGY…IRQGLELTLL (160 aa)) are Cytoplasmic-facing. The YXXV motif; contains endocytosis signal motif lies at 709 to 712 (YRPV). The interval 715 to 744 (SPPSYTQQIPIRKDRGQPANEETEEGGGND) is disordered. C775 is lipidated: S-palmitoyl cysteine; by host. Positions 858–859 (LL) match the Di-leucine internalization motif motif.

In terms of assembly, the mature envelope protein (Env) consists of a homotrimer of non-covalently associated gp120-gp41 heterodimers. The resulting complex protrudes from the virus surface as a spike. There seems to be as few as 10 spikes on the average virion. Interacts with human CD4, CCR5 and CXCR4, to form a P4HB/PDI-CD4-CXCR4-gp120 complex. Gp120 also interacts with the C-type lectins CD209/DC-SIGN and CLEC4M/DC-SIGNR (collectively referred to as DC-SIGN(R)). Gp120 and gp41 interact with GalCer. As to quaternary structure, the mature envelope protein (Env) consists of a homotrimer of non-covalently associated gp120-gp41 heterodimers. The resulting complex protrudes from the virus surface as a spike. There seems to be as few as 10 spikes on the average virion. In terms of processing, specific enzymatic cleavages in vivo yield mature proteins. Envelope glycoproteins are synthesized as an inactive precursor that is heavily N-glycosylated and processed likely by host cell furin in the Golgi to yield the mature SU and TM proteins. The cleavage site between SU and TM requires the minimal sequence [KR]-X-[KR]-R. Palmitoylation of the transmembrane protein and of Env polyprotein (prior to its proteolytic cleavage) is essential for their association with host cell membrane lipid rafts. Palmitoylation is therefore required for envelope trafficking to classical lipid rafts, but not for viral replication.

It is found in the virion membrane. The protein resides in the host cell membrane. The protein localises to the host endosome membrane. In terms of biological role, the surface protein gp120 (SU) attaches the virus to the host lymphoid cell by binding to the primary receptor CD4. This interaction induces a structural rearrangement creating a high affinity binding site for a chemokine coreceptor like CXCR4 and/or CCR5. This peculiar 2 stage receptor-interaction strategy allows gp120 to maintain the highly conserved coreceptor-binding site in a cryptic conformation, protected from neutralizing antibodies. Since CD4 also displays a binding site for the disulfide-isomerase P4HB/PDI, a P4HB/PDI-CD4-CXCR4-gp120 complex may form. In that complex, P4HB/PDI could reach and reduce gp120 disulfide bonds, causing major conformational changes in gp120. TXN, another PDI family member could also be involved in disulfide rearrangements in Env during fusion. These changes are transmitted to the transmembrane protein gp41 and are thought to activate its fusogenic potential by unmasking its fusion peptide. Functionally, the surface protein gp120 is a ligand for CD209/DC-SIGN and CLEC4M/DC-SIGNR, which are respectively found on dendritic cells (DCs), and on endothelial cells of liver sinusoids and lymph node sinuses. These interactions allow capture of viral particles at mucosal surfaces by these cells and subsequent transmission to permissive cells. DCs are professional antigen presenting cells, critical for host immunity by inducing specific immune responses against a broad variety of pathogens. They act as sentinels in various tissues where they take up antigen, process it, and present it to T-cells following migration to lymphoid organs. HIV subverts the migration properties of dendritic cells to gain access to CD4+ T-cells in lymph nodes. Virus transmission to permissive T-cells occurs either in trans (without DCs infection, through viral capture and transmission), or in cis (following DCs productive infection, through the usual CD4-gp120 interaction), thereby inducing a robust infection. In trans infection, bound virions remain infectious over days and it is proposed that they are not degraded, but protected in non-lysosomal acidic organelles within the DCs close to the cell membrane thus contributing to the viral infectious potential during DCs' migration from the periphery to the lymphoid tissues. On arrival at lymphoid tissues, intact virions recycle back to DCs' cell surface allowing virus transmission to CD4+ T-cells. Virion capture also seems to lead to MHC-II-restricted viral antigen presentation, and probably to the activation of HIV-specific CD4+ cells. Its function is as follows. The transmembrane protein gp41 (TM) acts as a class I viral fusion protein. Under the current model, the protein has at least 3 conformational states: pre-fusion native state, pre-hairpin intermediate state, and post-fusion hairpin state. During fusion of viral and target intracellular membranes, the coiled coil regions (heptad repeats) assume a trimer-of-hairpins structure, positioning the fusion peptide in close proximity to the C-terminal region of the ectodomain. The formation of this structure appears to drive apposition and subsequent fusion of viral and target cell membranes. Complete fusion occurs in host cell endosomes and is dynamin-dependent, however some lipid transfer might occur at the plasma membrane. The virus undergoes clathrin-dependent internalization long before endosomal fusion, thus minimizing the surface exposure of conserved viral epitopes during fusion and reducing the efficacy of inhibitors targeting these epitopes. Membranes fusion leads to delivery of the nucleocapsid into the cytoplasm. The envelope glycoprotein gp160 precursor down-modulates cell surface CD4 antigen by interacting with it in the endoplasmic reticulum and blocking its transport to the cell surface. In terms of biological role, the gp120-gp41 heterodimer seems to contribute to T-cell depletion during HIV-1 infection. The envelope glycoproteins expressed on the surface of infected cells induce apoptosis through an interaction with uninfected cells expressing the receptor (CD4) and the coreceptors CXCR4 or CCR5. This type of bystander killing may be obtained by at least three distinct mechanisms. First, the interaction between the 2 cells can induce cellular fusion followed by nuclear fusion within the syncytium. Syncytia are condemned to die from apoptosis. Second, the 2 interacting cells may not fuse entirely and simply exchange plasma membrane lipids, after a sort of hemifusion process, followed by rapid death. Third, it is possible that virus-infected cells, on the point of undergoing apoptosis, fuse with CD4-expressing cells, in which case apoptosis is rapidly transmitted from one cell to the other and thus occurs in a sort of contagious fashion. Functionally, the gp120-gp41 heterodimer allows rapid transcytosis of the virus through CD4 negative cells such as simple epithelial monolayers of the intestinal, rectal and endocervical epithelial barriers. Both gp120 and gp41 specifically recognize glycosphingolipids galactosyl-ceramide (GalCer) or 3' sulfo-galactosyl-ceramide (GalS) present in the lipid rafts structures of epithelial cells. Binding to these alternative receptors allows the rapid transcytosis of the virus through the epithelial cells. This transcytotic vesicle-mediated transport of virions from the apical side to the basolateral side of the epithelial cells does not involve infection of the cells themselves. The sequence is that of Envelope glycoprotein gp160 (env) from Human immunodeficiency virus type 2 subtype B (isolate D205) (HIV-2).